Here is a 317-residue protein sequence, read N- to C-terminus: Ribosomal protein L11 methyltransferase (317 aa).

S-adenosyl-L-methionine is bound by residues Thr158, Gly179, Asp201, and Asn244.

This sequence belongs to the methyltransferase superfamily. PrmA family.

Its subcellular location is the cytoplasm. It carries out the reaction L-lysyl-[protein] + 3 S-adenosyl-L-methionine = N(6),N(6),N(6)-trimethyl-L-lysyl-[protein] + 3 S-adenosyl-L-homocysteine + 3 H(+). Its function is as follows. Methylates ribosomal protein L11. This is Ribosomal protein L11 methyltransferase from Lactococcus lactis subsp. lactis (strain IL1403) (Streptococcus lactis).